A 458-amino-acid chain; its full sequence is Sensor histidine kinase ZraS (458 aa).

The Cytoplasmic portion of the chain corresponds to 1–14 (MRFMQRSKDSLAKW). Residues 15–35 (LSAILPVVIVGLVGLFAVTVI) form a helical membrane-spanning segment. Over 36 to 194 (RDYGRETAAA…SAEDREQRNT (159 aa)) the chain is Periplasmic. Residues 195–215 (LIILFALATVLLASVLSFFWY) form a helical membrane-spanning segment. Over 216-458 (RRYLRSRQLL…VNITRKDPQG (243 aa)) the chain is Cytoplasmic. The 208-residue stretch at 244 to 451 (GVAHEIRNPL…RFTLWLPVNI (208 aa)) folds into the Histidine kinase domain. A Phosphohistidine; by autocatalysis modification is found at His247.

Autophosphorylated.

The protein resides in the cell inner membrane. It catalyses the reaction ATP + protein L-histidine = ADP + protein N-phospho-L-histidine.. Its activity is regulated as follows. Activity of the ZraS/ZraR two-component system is repressed by the zinc-bound form of ZraP, which probably interacts with the periplasmic region of ZraS. In terms of biological role, part of the Zra signaling pathway, an envelope stress response (ESR) system composed of the periplasmic accessory protein ZraP, the histidine kinase ZraS and the transcriptional regulator ZraR. The ZraPSR system contributes to antibiotic resistance and is important for membrane integrity in the presence of membrane-targeting biocides. ZraS is a member of the two-component regulatory system ZraS/ZraR. Functions as a membrane-associated sensor kinase that phosphorylates ZraR in response to high concentrations of Zn(2+) or Pb(2+) in the medium. The protein is Sensor histidine kinase ZraS (zraS) of Escherichia coli O157:H7.